The chain runs to 475 residues: tRNA-2-methylthio-N(6)-dimethylallyladenosine synthase (475 aa).

Residues 3–120 (KKLHIKTWGC…LPEMIDQIKD (118 aa)) form the MTTase N-terminal domain. [4Fe-4S] cluster-binding residues include Cys12, Cys49, Cys83, Cys157, Cys161, and Cys164. The 233-residue stretch at 143–375 (RAEGPSAFVS…QDRITQQAMR (233 aa)) folds into the Radical SAM core domain. One can recognise a TRAM domain in the interval 378–441 (RQMVGTVQRI…TNSLRGVFIR (64 aa)).

The protein belongs to the methylthiotransferase family. MiaB subfamily. As to quaternary structure, monomer. It depends on [4Fe-4S] cluster as a cofactor.

Its subcellular location is the cytoplasm. It catalyses the reaction N(6)-dimethylallyladenosine(37) in tRNA + (sulfur carrier)-SH + AH2 + 2 S-adenosyl-L-methionine = 2-methylsulfanyl-N(6)-dimethylallyladenosine(37) in tRNA + (sulfur carrier)-H + 5'-deoxyadenosine + L-methionine + A + S-adenosyl-L-homocysteine + 2 H(+). Its function is as follows. Catalyzes the methylthiolation of N6-(dimethylallyl)adenosine (i(6)A), leading to the formation of 2-methylthio-N6-(dimethylallyl)adenosine (ms(2)i(6)A) at position 37 in tRNAs that read codons beginning with uridine. This chain is tRNA-2-methylthio-N(6)-dimethylallyladenosine synthase, found in Shewanella pealeana (strain ATCC 700345 / ANG-SQ1).